A 333-amino-acid polypeptide reads, in one-letter code: Casein kinase II subunit alpha-2 (333 aa).

Positions 34-319 (YEVVRKVGRG…AREAMAHPYF (286 aa)) constitute a Protein kinase domain. ATP is bound by residues 40–48 (VGRGKYSEV) and lysine 63. The Proton acceptor role is filled by aspartate 151.

Belongs to the protein kinase superfamily. Ser/Thr protein kinase family. CK2 subfamily. In terms of assembly, monomer. In terms of processing, autophosphorylated.

It localises to the cytoplasm. It catalyses the reaction L-seryl-[protein] + ATP = O-phospho-L-seryl-[protein] + ADP + H(+). It carries out the reaction L-threonyl-[protein] + ATP = O-phospho-L-threonyl-[protein] + ADP + H(+). Its function is as follows. Casein kinases are operationally defined by their preferential utilization of acidic proteins such as caseins as substrates. It can phosphorylate a large number of proteins. Involved in photoperiod sensitivity (PS). Increases days-to-heading under natural day (ND) and long day (LD) conditions, but not under short day (SD) conditions. The sequence is that of Casein kinase II subunit alpha-2 from Oryza sativa subsp. indica (Rice).